Here is a 490-residue protein sequence, read N- to C-terminus: Cytochrome P450 2C28 (490 aa).

Serine 127 carries the post-translational modification Phosphoserine. 2 positions are modified to N6-acetyllysine: lysine 249 and lysine 375. Cysteine 435 provides a ligand contact to heme.

Belongs to the cytochrome P450 family. The cofactor is heme. Liver.

The protein resides in the endoplasmic reticulum membrane. The protein localises to the microsome membrane. The catalysed reaction is an organic molecule + reduced [NADPH--hemoprotein reductase] + O2 = an alcohol + oxidized [NADPH--hemoprotein reductase] + H2O + H(+). In terms of biological role, catalyzes the N-demethylation of aminopyrine and benzphetamine, but does not catalyze the hydroxylation of tolbutamide, testosterone, and progesterone. The protein is Cytochrome P450 2C28 (CYP2C28) of Mesocricetus auratus (Golden hamster).